Consider the following 403-residue polypeptide: MTQKKKVVLAYSGGLDTSVAIKWLQEQGYDVVACCLDVGEGKDLAFVQQKALQVGASNSYVIDAKEEFAKEFALTALQAHTLYEGKYPLVSALSRPLIAKKLVEVAEKENAQAVAHGCTGKGNDQVRFEVSIKSLNPDLEVLAPVREWKWSRDEEIAYAEKHGIPIPINLDSPYSIDQNLWGRSNECGVLEDPWAAPPEGAYDLTKPLEKTPDTPDVIEIAFEEGVPVSIDGTHYPLSDLILKLNELAGAHGVGRIDHVENRLVGIKSREVYECPGAMTLIKAHKELEDLTLVKEVAHFKPIIEQKMAEVIYNGLWFSPLKDALSGFLKETQKHVTGVVRVKLFKGHAIVEGRKSEYSLYDEKLATYTKDDAFDHHAAVGFIELWGLPTKVNSIVQKKEQIKA.

10–18 is a binding site for ATP; it reads AYSGGLDTS. Tyrosine 87 provides a ligand contact to L-citrulline. Glycine 117 contributes to the ATP binding site. L-aspartate-binding residues include threonine 119, asparagine 123, and aspartate 124. Asparagine 123 is a binding site for L-citrulline. L-citrulline-binding residues include arginine 127, serine 175, serine 184, glutamate 260, and tyrosine 272.

This sequence belongs to the argininosuccinate synthase family. Type 1 subfamily. As to quaternary structure, homotetramer.

Its subcellular location is the cytoplasm. The catalysed reaction is L-citrulline + L-aspartate + ATP = 2-(N(omega)-L-arginino)succinate + AMP + diphosphate + H(+). It functions in the pathway amino-acid biosynthesis; L-arginine biosynthesis; L-arginine from L-ornithine and carbamoyl phosphate: step 2/3. This is Argininosuccinate synthase from Bacillus licheniformis (strain ATCC 14580 / DSM 13 / JCM 2505 / CCUG 7422 / NBRC 12200 / NCIMB 9375 / NCTC 10341 / NRRL NRS-1264 / Gibson 46).